We begin with the raw amino-acid sequence, 340 residues long: Glyceraldehyde-3-phosphate dehydrogenase (340 aa).

NAD(+)-binding positions include Ser11–Ile12 and Gly111. Ser140–Asn142 serves as a coordination point for D-glyceraldehyde 3-phosphate. The Nucleophile role is filled by Cys141. An NAD(+)-binding site is contributed by Arg169. His195–Gly196 is a binding site for D-glyceraldehyde 3-phosphate. Position 303 (Gln303) interacts with NAD(+).

It belongs to the glyceraldehyde-3-phosphate dehydrogenase family. As to quaternary structure, homotetramer.

It is found in the cytoplasm. It catalyses the reaction D-glyceraldehyde 3-phosphate + phosphate + NADP(+) = (2R)-3-phospho-glyceroyl phosphate + NADPH + H(+). The enzyme catalyses D-glyceraldehyde 3-phosphate + phosphate + NAD(+) = (2R)-3-phospho-glyceroyl phosphate + NADH + H(+). The protein operates within carbohydrate degradation; glycolysis; pyruvate from D-glyceraldehyde 3-phosphate: step 1/5. The sequence is that of Glyceraldehyde-3-phosphate dehydrogenase from Methanococcus maripaludis (strain C5 / ATCC BAA-1333).